We begin with the raw amino-acid sequence, 464 residues long: Macrophage metalloelastase (464 aa).

A signal peptide spans 1–17 (MKFLLLILTLWVTSSGA). Residues 18–100 (DPLKENDMLF…DVYHFKTMPG (83 aa)) constitute a propeptide, activation peptide. Asparagine 69 carries an N-linked (GlcNAc...) asparagine glycan. A Cysteine switch motif is present at residues 85-92 (PRCGVPDV). Cysteine 87 is a binding site for Zn(2+). Ca(2+)-binding residues include aspartate 119 and aspartate 153. Zn(2+)-binding residues include histidine 163 and aspartate 165. Ca(2+)-binding residues include aspartate 170, glycine 171, glycine 173, and valine 175. Histidine 178 is a Zn(2+) binding site. Residues glycine 185, glycine 187, and aspartate 189 each coordinate Ca(2+). Position 191 (histidine 191) interacts with Zn(2+). 3 residues coordinate Ca(2+): aspartate 193, glutamate 194, and glutamate 196. Histidine 213 is a binding site for Zn(2+). Residue glutamate 214 is part of the active site. Zn(2+) contacts are provided by histidine 217 and histidine 223. 4 Hemopexin repeats span residues 274-323 (PTAC…WPTL), 324-370 (PSGI…GFPD), 372-420 (VKKI…FPGI), and 421-464 (GPKI…WFDC). Cysteine 277 and cysteine 464 are disulfide-bonded. Residues aspartate 284, glutamate 328, aspartate 376, and aspartate 425 each coordinate Ca(2+).

This sequence belongs to the peptidase M10A family. It depends on Ca(2+) as a cofactor. Zn(2+) serves as cofactor.

Its subcellular location is the secreted. It localises to the extracellular space. The protein localises to the extracellular matrix. The enzyme catalyses Hydrolysis of soluble and insoluble elastin. Specific cleavages are also produced at 14-Ala-|-Leu-15 and 16-Tyr-|-Leu-17 in the B chain of insulin.. May be involved in tissue injury and remodeling. Has significant elastolytic activity. Can accept large and small amino acids at the P1' site, but has a preference for leucine. Aromatic or hydrophobic residues are preferred at the P1 site, with small hydrophobic residues (preferably alanine) occupying P3. The chain is Macrophage metalloelastase (MMP12) from Oryctolagus cuniculus (Rabbit).